Here is a 377-residue protein sequence, read N- to C-terminus: Flagellin D (377 aa).

2 coiled-coil regions span residues 103–129 (SNSKSERVAIQEEITALNDELNRIAET) and 310–339 (AFQNRFNHAISNLDNINENVNASKSRIKDT).

The protein belongs to the bacterial flagellin family. As to quaternary structure, heteromer of multiple flagellin subunits including FlaA, FlaB, FlaC, FlaD and FlaE.

It is found in the secreted. Its subcellular location is the bacterial flagellum. Flagellin is the subunit protein which polymerizes to form the filaments of bacterial flagella. FlaD is not essential for flagellar synthesis and motility. This is Flagellin D (flaD) from Vibrio cholerae serotype O1 (strain ATCC 39315 / El Tor Inaba N16961).